A 272-amino-acid polypeptide reads, in one-letter code: 2,3,4,5-tetrahydropyridine-2,6-dicarboxylate N-succinyltransferase (272 aa).

Residues Arg104 and Asp141 each coordinate substrate.

It belongs to the transferase hexapeptide repeat family. Homotrimer.

Its subcellular location is the cytoplasm. It carries out the reaction (S)-2,3,4,5-tetrahydrodipicolinate + succinyl-CoA + H2O = (S)-2-succinylamino-6-oxoheptanedioate + CoA. The protein operates within amino-acid biosynthesis; L-lysine biosynthesis via DAP pathway; LL-2,6-diaminopimelate from (S)-tetrahydrodipicolinate (succinylase route): step 1/3. In Dechloromonas aromatica (strain RCB), this protein is 2,3,4,5-tetrahydropyridine-2,6-dicarboxylate N-succinyltransferase.